We begin with the raw amino-acid sequence, 641 residues long: Epithelial sodium channel subunit beta (641 aa).

Residues 1-50 (MHVKKYLLKCLHRLQKGPGYTYKELLVWYCDNTNTHGPKRIIREGPKKKA) are Cytoplasmic-facing. Residues 51 to 71 (MWFLITLLFASLVCWQWGVFI) form a helical membrane-spanning segment. The Extracellular portion of the chain corresponds to 72-533 (KTYLSWEVSV…GGQFGFWMGG (462 aa)). Disulfide bonds link Cys98-Cys273, Cys185-Cys190, Cys197-Cys204, Cys250-Cys257, Cys362-Cys449, Cys387-Cys445, Cys391-Cys441, Cys400-Cys427, and Cys402-Cys416. Residue Asn141 is glycosylated (N-linked (GlcNAc...) asparagine). Residues Asn261 and Asn379 are each glycosylated (N-linked (GlcNAc...) asparagine). A helical transmembrane segment spans residues 534-554 (SVLCLIEFAEIIIDFVWITII). The Cytoplasmic segment spans residues 555–641 (KLVALAKGLR…VESDSEGDAV (87 aa)). The segment at 596–641 (GHRSPDAEAYPDEQALPIPGTPPPNYDSLRLQPLDVVESDSEGDAV) is disordered. A PY motif; recruits WW domain-containing proteins and is thereby required for ubiquitination and inhibition of the channel by NEDD4 and NEDD4L motif is present at residues 617–621 (PPPNY). Residues 632 to 641 (VESDSEGDAV) are compositionally biased toward acidic residues. 2 positions are modified to phosphoserine: Ser634 and Ser636.

This sequence belongs to the amiloride-sensitive sodium channel (TC 1.A.6) family. SCNN1B subfamily. Component of the heterotrimeric epithelial sodium channel (ENaC) composed of an alpha/SCNN1A, a beta/SCNN1B and a gamma/SCNN1G subunit. Interacts with WWP1 (via WW domains). Interacts with WWP2 (via WW domains); inhibits the channel. Interacts with the full-length immature form of PCSK9 (pro-PCSK9). Interacts (N-glycosylated) with BPIFA1; the interaction is direct and inhibits the proteolytic processing of SCNN1A and SCNN1G and the activation of ENaC. In terms of processing, ubiquitinated. Can be ubiquitinated at multiple sites and undergo monoubiquitination and polyubiquitination. Ubiquitination by NEDD4 or NEDD4L inhibits the ENaC channel through endocytosis, intracellular retention and degradation of its individual subunits. However, some studies could not confirm the ubiquitination of this subunit of the ENaC. Post-translationally, phosphorylated on serine and threonine residues. Aldosterone and insulin increase the basal level of phosphorylation. N-glycosylated. N-glycosylation is required for interaction with BPIFA1.

The protein localises to the apical cell membrane. It is found in the cytoplasmic vesicle membrane. It catalyses the reaction Na(+)(in) = Na(+)(out). With respect to regulation, originally identified and characterized by its inhibition by the diuretic drug amiloride. In terms of biological role, this is one of the three pore-forming subunits of the heterotrimeric epithelial sodium channel (ENaC), a critical regulator of sodium balance and fluid homeostasis. ENaC operates in epithelial tissues, where it mediates the electrodiffusion of sodium ions from extracellular fluid through the apical membrane of cells, with water following osmotically. It plays a key role in maintaining sodium homeostasis through electrogenic sodium reabsorption in the kidneys. Additionally, ENaC is essential for airway surface liquid homeostasis, which is crucial for proper mucus clearance. This is Epithelial sodium channel subunit beta from Oryctolagus cuniculus (Rabbit).